Reading from the N-terminus, the 269-residue chain is MPELPEVEIIRRGIEPWVVGHIIQRAEIRNNQLRWPIDQEIISIHQRRVISLKRRAKYLLMQLHHGWIIIHFGMSGRLRILAHMLPPEKHDHIDLIMSNNCILRYTDPRRFGAWLWSNNLDKMSILNNLGVEPLSDQFDGHWLFTKSRNKSLLIKQFLMTNKLVVGIGNIYANEALFAAGILPSRASCSLKEQEALLLARSIKAILLSSIEEGGTTLRDFLQSDGRDGLFAKKLQVYGRHGEPCYTCGEFIQIAKYGQRSSFFCPSCQN.

Pro2 acts as the Schiff-base intermediate with DNA in catalysis. Glu3 serves as the catalytic Proton donor. Catalysis depends on Lys57, which acts as the Proton donor; for beta-elimination activity. 3 residues coordinate DNA: His90, Arg109, and Lys150. The segment at 235 to 269 adopts an FPG-type zinc-finger fold; the sequence is QVYGRHGEPCYTCGEFIQIAKYGQRSSFFCPSCQN. Arg259 functions as the Proton donor; for delta-elimination activity in the catalytic mechanism.

This sequence belongs to the FPG family. As to quaternary structure, monomer. Requires Zn(2+) as cofactor.

The catalysed reaction is Hydrolysis of DNA containing ring-opened 7-methylguanine residues, releasing 2,6-diamino-4-hydroxy-5-(N-methyl)formamidopyrimidine.. It carries out the reaction 2'-deoxyribonucleotide-(2'-deoxyribose 5'-phosphate)-2'-deoxyribonucleotide-DNA = a 3'-end 2'-deoxyribonucleotide-(2,3-dehydro-2,3-deoxyribose 5'-phosphate)-DNA + a 5'-end 5'-phospho-2'-deoxyribonucleoside-DNA + H(+). Its function is as follows. Involved in base excision repair of DNA damaged by oxidation or by mutagenic agents. Acts as a DNA glycosylase that recognizes and removes damaged bases. Has a preference for oxidized purines, such as 7,8-dihydro-8-oxoguanine (8-oxoG). Has AP (apurinic/apyrimidinic) lyase activity and introduces nicks in the DNA strand. Cleaves the DNA backbone by beta-delta elimination to generate a single-strand break at the site of the removed base with both 3'- and 5'-phosphates. This chain is Formamidopyrimidine-DNA glycosylase, found in Baumannia cicadellinicola subsp. Homalodisca coagulata.